The sequence spans 491 residues: Peptidoglycan D,D-transpeptidase PbpA (491 aa).

Topologically, residues 1-7 (MNASLRR) are cytoplasmic. Residues 8–28 (ISVTVMALIVLLLLNATMTQV) form a helical; Signal-anchor for type II membrane protein membrane-spanning segment. Topologically, residues 29–491 (FTADGLRADP…VIEAALQGEP (463 aa)) are periplasmic. The transpeptidase stretch occupies residues 160–484 (GAVVALEPST…AAPIGRAVIE (325 aa)). The active-site Acyl-ester intermediate is the serine 222.

Belongs to the transpeptidase family.

It localises to the cell inner membrane. It catalyses the reaction Preferential cleavage: (Ac)2-L-Lys-D-Ala-|-D-Ala. Also transpeptidation of peptidyl-alanyl moieties that are N-acyl substituents of D-alanine.. It functions in the pathway cell wall biogenesis; peptidoglycan biosynthesis. In terms of biological role, transpeptidase that catalyzes cross-linking of the peptidoglycan cell wall. Required for the regulation of cell length. This is Peptidoglycan D,D-transpeptidase PbpA (pbpA) from Mycobacterium tuberculosis (strain CDC 1551 / Oshkosh).